A 272-amino-acid polypeptide reads, in one-letter code: MSAGEISTPQEYIGHHLNNLQLDLRTFELVNPHDGPASFWTLNIDSMFFSVVLGLIFLALFRKVAKNATSGVPGKFQTAVELIIGFVDGSVRDMYHGKSKLIAPLALTIFVWVFLMNLMDLVPIDFLPYIAEHWMGLPALRVVPSADVNITLSMALGVFILILFYSIKMKGVGGFVKELTLQPFNHPVFIPVNLILEGVSLLSKPVSLGLRLFGNMYAGELIFILIAGLLPWWSQWLLNVPWAIFHILIITLQAFIFMVLTIVYLSMASEEH.

5 helical membrane passes run T41–F61, I102–V122, D147–I167, L212–W232, and A243–V263.

This sequence belongs to the ATPase A chain family. In terms of assembly, F-type ATPases have 2 components, CF(1) - the catalytic core - and CF(0) - the membrane proton channel. CF(1) has five subunits: alpha(3), beta(3), gamma(1), delta(1), epsilon(1). CF(0) has three main subunits: a(1), b(2) and c(9-12). The alpha and beta chains form an alternating ring which encloses part of the gamma chain. CF(1) is attached to CF(0) by a central stalk formed by the gamma and epsilon chains, while a peripheral stalk is formed by the delta and b chains.

The protein resides in the cell inner membrane. In terms of biological role, key component of the proton channel; it plays a direct role in the translocation of protons across the membrane. The polypeptide is ATP synthase subunit a (Edwardsiella ictaluri (strain 93-146)).